Reading from the N-terminus, the 82-residue chain is MRIMARIGVENSLTDVQQALQQQGHEVVTLNSEQDAQGCDCCVVTGQDSNVMGIADTSIKGSVITAHGLTTDEICQQVESRT.

This sequence belongs to the UPF0180 family.

This Bacillus cereus (strain ATCC 14579 / DSM 31 / CCUG 7414 / JCM 2152 / NBRC 15305 / NCIMB 9373 / NCTC 2599 / NRRL B-3711) protein is UPF0180 protein BC_1394.